We begin with the raw amino-acid sequence, 413 residues long: RNA-binding protein 41 (413 aa).

The disordered stretch occupies residues serine 225–lysine 247. The RRM domain maps to lysine 309 to serine 387.

May bind RNA. In Mus musculus (Mouse), this protein is RNA-binding protein 41 (Rbm41).